We begin with the raw amino-acid sequence, 344 residues long: N-acetyl-gamma-glutamyl-phosphate reductase (344 aa).

Cysteine 149 is an active-site residue.

Belongs to the NAGSA dehydrogenase family. Type 1 subfamily.

It localises to the cytoplasm. It carries out the reaction N-acetyl-L-glutamate 5-semialdehyde + phosphate + NADP(+) = N-acetyl-L-glutamyl 5-phosphate + NADPH + H(+). It participates in amino-acid biosynthesis; L-arginine biosynthesis; N(2)-acetyl-L-ornithine from L-glutamate: step 3/4. Its function is as follows. Catalyzes the NADPH-dependent reduction of N-acetyl-5-glutamyl phosphate to yield N-acetyl-L-glutamate 5-semialdehyde. This is N-acetyl-gamma-glutamyl-phosphate reductase from Thermoanaerobacter sp. (strain X514).